The chain runs to 274 residues: Nitrogenase iron protein (274 aa).

G8–S15 is a binding site for ATP. C94 contacts [4Fe-4S] cluster. Residue R97 is modified to ADP-ribosylarginine; by dinitrogenase reductase ADP-ribosyltransferase. [4Fe-4S] cluster is bound at residue C131.

This sequence belongs to the NifH/BchL/ChlL family. Homodimer. Requires [4Fe-4S] cluster as cofactor. In terms of processing, the reversible ADP-ribosylation of Arg-97 inactivates the nitrogenase reductase and regulates nitrogenase activity.

It carries out the reaction N2 + 8 reduced [2Fe-2S]-[ferredoxin] + 16 ATP + 16 H2O = H2 + 8 oxidized [2Fe-2S]-[ferredoxin] + 2 NH4(+) + 16 ADP + 16 phosphate + 6 H(+). The key enzymatic reactions in nitrogen fixation are catalyzed by the nitrogenase complex, which has 2 components: the iron protein and the molybdenum-iron protein. This chain is Nitrogenase iron protein, found in Chlorobaculum parvum (strain DSM 263 / NCIMB 8327) (Chlorobium vibrioforme subsp. thiosulfatophilum).